A 312-amino-acid chain; its full sequence is D-apiose import binding protein (312 aa).

Residues 1 to 26 form the signal peptide; it reads MKASKRWVALAAATLTLFTATGTAQA. D-apiofuranose-binding positions include Asn39, 115–116, 162–164, Arg168, Asn218, Asp243, and Gln263; these read DR and DIN.

The protein belongs to the bacterial solute-binding protein 2 family.

It is found in the periplasm. Its function is as follows. Part of an ABC transporter complex involved in D-apiose import. Binds D-apiose, D-ribose and D-ribulose. The chain is D-apiose import binding protein from Paraburkholderia graminis (strain ATCC 700544 / DSM 17151 / LMG 18924 / NCIMB 13744 / C4D1M).